The following is a 307-amino-acid chain: Aspartate carbamoyltransferase catalytic subunit (307 aa).

Carbamoyl phosphate is bound by residues Arg-54 and Thr-55. Residue Lys-83 coordinates L-aspartate. Positions 104, 132, and 135 each coordinate carbamoyl phosphate. Positions 165 and 228 each coordinate L-aspartate. Residues Leu-267 and Pro-268 each contribute to the carbamoyl phosphate site.

This sequence belongs to the aspartate/ornithine carbamoyltransferase superfamily. ATCase family. As to quaternary structure, heterododecamer (2C3:3R2) of six catalytic PyrB chains organized as two trimers (C3), and six regulatory PyrI chains organized as three dimers (R2).

The enzyme catalyses carbamoyl phosphate + L-aspartate = N-carbamoyl-L-aspartate + phosphate + H(+). It functions in the pathway pyrimidine metabolism; UMP biosynthesis via de novo pathway; (S)-dihydroorotate from bicarbonate: step 2/3. Its function is as follows. Catalyzes the condensation of carbamoyl phosphate and aspartate to form carbamoyl aspartate and inorganic phosphate, the committed step in the de novo pyrimidine nucleotide biosynthesis pathway. The protein is Aspartate carbamoyltransferase catalytic subunit of Clostridium botulinum (strain Alaska E43 / Type E3).